A 1059-amino-acid polypeptide reads, in one-letter code: Disks large-associated protein 2 (1059 aa).

Disordered regions lie at residues 31-54 and 245-311; these read GEPE…PAEE and KSHS…SDST. A compositionally biased stretch (polar residues) spans 245 to 261; sequence KSHSLEGSSKSNINGTK. A compositionally biased stretch (basic and acidic residues) spans 262–271; the sequence is SDSRVDDHHQ. Basic residues predominate over residues 272–285; sequence SHLSKHSKRSKSKE. A phosphoserine mark is found at Ser302, Ser308, Ser390, and Ser456. A disordered region spans residues 613 to 669; sequence YKKTPPPVPPRTTSKPLISVTAQSSTESTQDAYQDSRAQRMSPWPQDSRGGLYNSMD. Residues 632 to 645 show a composition bias toward polar residues; the sequence is VTAQSSTESTQDAY. 4 positions are modified to phosphoserine: Ser667, Ser670, Ser673, and Ser720. Positions 723–756 are disordered; the sequence is VQDSEFPDHQPYPRSDVETATDSDTESRGLREYH. Position 743 is a phosphothreonine (Thr743). Ser745 bears the Phosphoserine mark. A compositionally biased stretch (basic and acidic residues) spans 747–756; sequence TESRGLREYH. A phosphoserine mark is found at Ser776, Ser811, Ser983, and Ser1012. Residues 985–1025 form a disordered region; that stretch reads ERKEERKIPPPIPKKPPKGKFPITREKSLDLPDRQRQEARR. Over residues 1007–1025 the composition is skewed to basic and acidic residues; the sequence is ITREKSLDLPDRQRQEARR.

Belongs to the SAPAP family. Interacts with DLG4/PSD-95. As to expression, expressed in various brain areas.

The protein localises to the cell membrane. Its subcellular location is the postsynaptic density. It is found in the synapse. Functionally, may play a role in the molecular organization of synapses and neuronal cell signaling. Could be an adapter protein linking ion channel to the subsynaptic cytoskeleton. May induce enrichment of PSD-95/SAP90 at the plasma membrane. The sequence is that of Disks large-associated protein 2 from Mus musculus (Mouse).